The chain runs to 31 residues: Malate dehydrogenase (31 aa).

Residue 11 to 17 (GAAGQIG) participates in NAD(+) binding.

The protein belongs to the LDH/MDH superfamily. MDH type 2 family.

The enzyme catalyses (S)-malate + NAD(+) = oxaloacetate + NADH + H(+). Catalyzes the reversible oxidation of malate to oxaloacetate. The sequence is that of Malate dehydrogenase (mdh) from Streptomyces atratus.